The sequence spans 363 residues: MSKNYHIAVLPGDGIGPEVMTQALKVLNAVRNRFAMRITTSHYDVGGAAIDNHGQPLPPATVEGCEQADAVLFGSVGGPKWEHLPPDQQPERGALLPLRKRFKLFSNLRPAKLYQGLEAFCPLRADIAANGFDILCVRELTGGIYFGQPKGREGSGQYEKAFDTEVYHRFEIERIARIAFESARKRRHKVTSIDKANVLQSSILWREIVNEIATEYPDVELAHMYIDNATMQLIKDPSQFDVLLCSNLFGDILSDECAMITGSMGMLPSASLNEQGFGLYEPAGGSAPDIAGKNIANPIAQILSLALLLRYSLDADDAACAIERAINRALEEGIRTGDLARGAAAVSTDEMGDIIARYVAEGV.

NAD(+) is bound at residue 78–91 (GPKWEHLPPDQQPE). Positions 99, 109, 138, and 227 each coordinate substrate. Positions 227, 251, and 255 each coordinate Mg(2+). Residue 285-297 (GSAPDIAGKNIAN) coordinates NAD(+).

Belongs to the isocitrate and isopropylmalate dehydrogenases family. LeuB type 1 subfamily. In terms of assembly, homodimer. Mg(2+) is required as a cofactor. Mn(2+) serves as cofactor.

It localises to the cytoplasm. It catalyses the reaction (2R,3S)-3-isopropylmalate + NAD(+) = 4-methyl-2-oxopentanoate + CO2 + NADH. The protein operates within amino-acid biosynthesis; L-leucine biosynthesis; L-leucine from 3-methyl-2-oxobutanoate: step 3/4. In terms of biological role, catalyzes the oxidation of 3-carboxy-2-hydroxy-4-methylpentanoate (3-isopropylmalate) to 3-carboxy-4-methyl-2-oxopentanoate. The product decarboxylates to 4-methyl-2 oxopentanoate. The chain is 3-isopropylmalate dehydrogenase from Shigella sonnei (strain Ss046).